The sequence spans 1541 residues: MDKFCNSTFWDLSLLESPEADLPLCFEQTVLVWIPLGFLWLLAPWQLYSVYRSRTKRSSITKFYLAKQVFVVFLLILAAIDLSLALTEDTGQATVPPVRYTNPILYLCTWLLVLAVQHSRQWCVRKNSWFLSLFWILSVLCGVFQFQTLIRALLKDSKSNMAYSYLFFVSYGFQIVLLILTAFSGPSDSTQTPSVTASFLSSITFSWYDRTVLKGYKHPLTLEDVWDIDEGFKTRSVTSKFEAAMTKDLQKARQAFQRRLQKSQRKPEATLHGLNKKQSQSQDVLVLEEAKKKSEKTTKDYPKSWLIKSLFKTFHVVILKSFILKLIHDLLVFLNPQLLKLLIGFVKSSNSYVWFGYICAILMFAVTLIQSFCLQSYFQHCFVLGMCVRTTVMSSIYKKALTLSNLARKQYTIGETVNLMSVDSQKLMDATNYMQLVWSSVIQITLSIFFLWRELGPSILAGVGVMVLLIPVNGVLATKIRNIQVQNMKNKDKRLKIMNEILSGIKILKYFAWEPSFQEQVQGIRKKELKNLLRFGQLQSLLIFILQITPILVSVVTFSVYVLVDSANVLNAEKAFTSITLFNILRFPLSMLPMVTSSILQASVSVDRLERYLGGDDLDTSAIRRVSNFDKAVKFSEASFTWDPDLEATIQDVNLDIKPGQLVAVVGTVGSGKSSLVSAMLGEMENVHGHITIQGSTAYVPQQSWIQNGTIKDNILFGSEYNEKKYQQVLKACALLPDLEILPGGDMAEIGEKGINLSGGQKQRVSLARAAYQDADIYILDDPLSAVDAHVGKHIFNKVVGPNGLLAGKTRIFVTHGIHFLPQVDEIVVLGKGTILEKGSYRDLLDKKGVFARNWKTFMKHSGPEGEATVNNDSEAEDDDDGLIPTMEEIPEDAASLAMRRENSLRRTLSRSSRSSSRRGKSLKNSLKIKNVNVLKEKEKEVEGQKLIKKEFVETGKVKFSIYLKYLQAVGWWSILFIILFYGLNNVAFIGSNLWLSAWTSDSDNLNGTNNSSSHRDMRIGVFGALGLAQGICLLISTLWSIYACRNASKALHGQLLTNILRAPMRFFDTTPTGRIVNRFSGDISTVDDLLPQTLRSWMMCFFGIAGTLVMICMATPVFAIIIIPLSILYISVQVFYVATSRQLRRLDSVTKSPIYSHFSETVTGLPIIRAFEHQQRFLAWNEKQIDINQKCVFSWITSNRWLAIRLELVGNLVVFCSALLLVIYRKTLTGDVVGFVLSNALNITQTLNWLVRMTSEAETNIVAVERISEYINVENEAPWVTDKRPPADWPRHGEIQFNNYQVRYRPELDLVLKGITCNIKSGEKVGVVGRTGAGKSSLTNCLFRILESAGGQIIIDGIDVASIGLHDLRERLTIIPQDPILFSGSLRMNLDPFNKYSDEEVWRALELAHLRSFVSGLQLGLLSEVTEGGDNLSIGQRQLLCLGRAVLRKSKILVLDEATAAVDLETDSLIQTTIRKEFSQCTVITIAHRLHTIMDSDKIMVLDNGKIVEYGSPEELLSNRGSFYLMAKEAGIENVNHTEL.

Topologically, residues 1–26 (MDKFCNSTFWDLSLLESPEADLPLCF) are extracellular. An N-linked (GlcNAc...) asparagine glycan is attached at Asn-6. The helical transmembrane segment at 27 to 47 (EQTVLVWIPLGFLWLLAPWQL) threads the bilayer. Residues 48 to 67 (YSVYRSRTKRSSITKFYLAK) lie on the Cytoplasmic side of the membrane. A helical membrane pass occupies residues 68–88 (QVFVVFLLILAAIDLSLALTE). The Extracellular segment spans residues 89–92 (DTGQ). Residues 93-113 (ATVPPVRYTNPILYLCTWLLV) form a helical membrane-spanning segment. Residues 114-125 (LAVQHSRQWCVR) lie on the Cytoplasmic side of the membrane. Residues 126-146 (KNSWFLSLFWILSVLCGVFQF) form a helical membrane-spanning segment. The Extracellular portion of the chain corresponds to 147–164 (QTLIRALLKDSKSNMAYS). A helical transmembrane segment spans residues 165-185 (YLFFVSYGFQIVLLILTAFSG). Over 186–309 (PSDSTQTPSV…DYPKSWLIKS (124 aa)) the chain is Cytoplasmic. A phosphoserine mark is found at Ser-279 and Ser-281. Residues 310–330 (LFKTFHVVILKSFILKLIHDL) traverse the membrane as a helical segment. The ABC transmembrane type-1 1 domain maps to 318–601 (ILKSFILKLI…LPMVTSSILQ (284 aa)). Over 331 to 356 (LVFLNPQLLKLLIGFVKSSNSYVWFG) the chain is Extracellular. Residues 357-377 (YICAILMFAVTLIQSFCLQSY) form a helical membrane-spanning segment. Over 378-433 (FQHCFVLGMCVRTTVMSSIYKKALTLSNLARKQYTIGETVNLMSVDSQKLMDATNY) the chain is Cytoplasmic. A helical transmembrane segment spans residues 434-454 (MQLVWSSVIQITLSIFFLWRE). The Extracellular segment spans residues 455 to 457 (LGP). The chain crosses the membrane as a helical span at residues 458–478 (SILAGVGVMVLLIPVNGVLAT). The Cytoplasmic portion of the chain corresponds to 479–540 (KIRNIQVQNM…NLLRFGQLQS (62 aa)). Residues 541-561 (LLIFILQITPILVSVVTFSVY) traverse the membrane as a helical segment. Topologically, residues 562 to 583 (VLVDSANVLNAEKAFTSITLFN) are extracellular. A helical transmembrane segment spans residues 584 to 604 (ILRFPLSMLPMVTSSILQASV). At 605 to 967 (SVDRLERYLG…VKFSIYLKYL (363 aa)) the chain is on the cytoplasmic side. The ABC transporter 1 domain maps to 633–857 (VKFSEASFTW…KGVFARNWKT (225 aa)). 667–674 (GTVGSGKS) provides a ligand contact to ATP. 2 disordered regions span residues 862 to 881 (SGPE…DDDD) and 901 to 923 (RENS…GKSL). Position 874 is a phosphoserine (Ser-874). Over residues 906 to 915 (RRTLSRSSRS) the composition is skewed to low complexity. Ser-922 and Ser-926 each carry phosphoserine. The helical transmembrane segment at 968-988 (QAVGWWSILFIILFYGLNNVA) threads the bilayer. In terms of domain architecture, ABC transmembrane type-1 2 spans 975–1260 (ILFIILFYGL…LVRMTSEAET (286 aa)). Topologically, residues 989–1029 (FIGSNLWLSAWTSDSDNLNGTNNSSSHRDMRIGVFGALGLA) are extracellular. N-linked (GlcNAc...) asparagine glycosylation is found at Asn-1007, Asn-1010, and Asn-1011. Residues 1030-1050 (QGICLLISTLWSIYACRNASK) form a helical membrane-spanning segment. Residues 1051 to 1093 (ALHGQLLTNILRAPMRFFDTTPTGRIVNRFSGDISTVDDLLPQ) lie on the Cytoplasmic side of the membrane. The chain crosses the membrane as a helical span at residues 1094–1114 (TLRSWMMCFFGIAGTLVMICM). A topological domain (extracellular) is located at residue Ala-1115. A helical transmembrane segment spans residues 1116-1136 (TPVFAIIIIPLSILYISVQVF). The Cytoplasmic portion of the chain corresponds to 1137–1207 (YVATSRQLRR…TSNRWLAIRL (71 aa)). Residues 1208-1228 (ELVGNLVVFCSALLLVIYRKT) form a helical membrane-spanning segment. The Extracellular segment spans residues 1229–1230 (LT). The chain crosses the membrane as a helical span at residues 1231–1251 (GDVVGFVLSNALNITQTLNWL). Residues 1252–1541 (VRMTSEAETN…GIENVNHTEL (290 aa)) are Cytoplasmic-facing. The ABC transporter 2 domain maps to 1296-1530 (IQFNNYQVRY…RGSFYLMAKE (235 aa)). Residue 1330 to 1337 (GRTGAGKS) coordinates ATP. Ser-1434 is modified (phosphoserine).

The protein belongs to the ABC transporter superfamily. ABCC family. Conjugate transporter (TC 3.A.1.208) subfamily. Mainly expressed in the liver.

It is found in the apical cell membrane. It carries out the reaction an S-substituted glutathione(in) + ATP + H2O = an S-substituted glutathione(out) + ADP + phosphate + H(+). The catalysed reaction is taurolithocholate 3-sulfate(in) + ATP + H2O = taurolithocholate 3-sulfate(out) + ADP + phosphate + H(+). It catalyses the reaction ATP + H2O + xenobioticSide 1 = ADP + phosphate + xenobioticSide 2.. The enzyme catalyses 17beta-estradiol 17-O-(beta-D-glucuronate)(in) + ATP + H2O = 17beta-estradiol 17-O-(beta-D-glucuronate)(out) + ADP + phosphate + H(+). It carries out the reaction leukotriene C4(in) + ATP + H2O = leukotriene C4(out) + ADP + phosphate + H(+). The catalysed reaction is (4Z,15Z)-bilirubin IXalpha C8-beta-D-glucuronoside(in) + ATP + H2O = (4Z,15Z)-bilirubin IXalpha C8-beta-D-glucuronoside(out) + ADP + phosphate + H(+). It catalyses the reaction (4Z,15Z)-bilirubin IXalpha C8,C12-beta-D-bisglucuronoside(in) + ATP + H2O = (4Z,15Z)-bilirubin IXalpha C8,C12-beta-D-bisglucuronoside(out) + ADP + phosphate + H(+). Its function is as follows. ATP-dependent transporter of the ATP-binding cassette (ABC) family that binds and hydrolyzes ATP to enable active transport of various substrates including many drugs, toxicants and endogenous compound across cell membranes. Transports a wide variety of conjugated organic anions such as sulfate-, glucuronide- and glutathione (GSH)-conjugates of endo- and xenobiotics substrates. Mediates hepatobiliary excretion of mono- and bis-glucuronidated bilirubin molecules and therefore play an important role in bilirubin detoxification. Also mediates hepatobiliary excretion of others glucuronide conjugates such as 17beta-estradiol 17-glucosiduronic acid and leukotriene C4. Transports sulfated bile salt such as taurolithocholate sulfate. Transports various anticancer drugs, such as anthracycline, vinca alkaloid and methotrexate and HIV-drugs such as protease inhibitors. The sequence is that of ATP-binding cassette sub-family C member 2 from Rattus norvegicus (Rat).